Here is a 116-residue protein sequence, read N- to C-terminus: UPF0482 protein PC1_2049 (116 aa).

A signal peptide spans 1–31 (MNHYSFSSLIRAFIPLSLVIVSAAWQPAALA).

It belongs to the UPF0482 family.

The chain is UPF0482 protein PC1_2049 from Pectobacterium carotovorum subsp. carotovorum (strain PC1).